A 240-amino-acid polypeptide reads, in one-letter code: Uridylate kinase (240 aa).

12–15 (KLSG) contributes to the ATP binding site. The involved in allosteric activation by GTP stretch occupies residues 20–25 (GDKGFG). Gly-54 is a UMP binding site. Residues Gly-55 and Arg-59 each coordinate ATP. UMP is bound by residues Asp-74 and 135–142 (TGSPYFST). Asn-163, Tyr-169, and Asp-172 together coordinate ATP.

The protein belongs to the UMP kinase family. In terms of assembly, homohexamer.

The protein localises to the cytoplasm. The enzyme catalyses UMP + ATP = UDP + ADP. Its pathway is pyrimidine metabolism; CTP biosynthesis via de novo pathway; UDP from UMP (UMPK route): step 1/1. With respect to regulation, allosterically activated by GTP. Inhibited by UTP. Functionally, catalyzes the reversible phosphorylation of UMP to UDP. The chain is Uridylate kinase from Levilactobacillus brevis (strain ATCC 367 / BCRC 12310 / CIP 105137 / JCM 1170 / LMG 11437 / NCIMB 947 / NCTC 947) (Lactobacillus brevis).